The sequence spans 204 residues: Ribonuclease HII (204 aa).

Residues 17-204 (QLVAGVDEVG…KPVQQLLQGD (188 aa)) form the RNase H type-2 domain. Positions 23, 24, and 115 each coordinate a divalent metal cation.

Belongs to the RNase HII family. Mn(2+) is required as a cofactor. Requires Mg(2+) as cofactor.

It is found in the cytoplasm. It carries out the reaction Endonucleolytic cleavage to 5'-phosphomonoester.. Endonuclease that specifically degrades the RNA of RNA-DNA hybrids. This is Ribonuclease HII from Hahella chejuensis (strain KCTC 2396).